The chain runs to 400 residues: Cell division protein FtsZ 2 (400 aa).

Residues 1-16 (MQDIVREAMERDEAER) show a composition bias toward basic and acidic residues. The segment at 1–30 (MQDIVREAMERDEAERQTQSSLEDSDDQFG) is disordered. Residues 41–45 (GAGNN), 128–130 (GTG), E159, R162, and D205 contribute to the GTP site. Residues 338 to 400 (VLGPSTQKQA…EKNNGLDVIR (63 aa)) are disordered. The span at 352–364 (QSIQSRESQQQHS) shows a compositional bias: low complexity. Over residues 365–382 (GSEFDSSERAQTAQSGTW) the composition is skewed to polar residues. A compositionally biased stretch (basic and acidic residues) spans 385–400 (GGRDEVEKNNGLDVIR).

Belongs to the FtsZ family. In terms of assembly, homodimer. Polymerizes to form a dynamic ring structure in a strictly GTP-dependent manner. Interacts directly with several other division proteins. Interacts with SepF.

It localises to the cytoplasm. Essential cell division protein that forms a contractile ring structure (Z ring) at the future cell division site. The regulation of the ring assembly controls the timing and the location of cell division. One of the functions of the FtsZ ring is to recruit other cell division proteins to the septum to produce a new cell wall between the dividing cells. Binds GTP and shows GTPase activity. Required for division ring constriction. This Haloferax volcanii (strain ATCC 29605 / DSM 3757 / JCM 8879 / NBRC 14742 / NCIMB 2012 / VKM B-1768 / DS2) (Halobacterium volcanii) protein is Cell division protein FtsZ 2.